The following is a 234-amino-acid chain: MAMDPNEIALFRIDITEFIDKCLISLNNNFSTDQEFKFLKQLMNYYYRTKFLYTKKTENSDNEESISDLNSDNPGNSEPSDVESFVLSDEDENSEKDFSYGEFSDYDDKSIQCKILGINSDDETNCDNDQDIPVVRQKTTNKKSTHHKFQEETISIDQLIQECRVFYDKNTHKTNDTDKETIQNINSISEAGEYIVNSLSPCFNLSVVESSMEFIDGSDNIDYTDPTEYCNIVS.

A disordered region spans residues Asn62–Ser99. Over residues Ser67–Pro79 the composition is skewed to polar residues.

This is an uncharacterized protein from Acanthamoeba polyphaga (Amoeba).